A 517-amino-acid chain; its full sequence is Aspartyl/glutamyl-tRNA(Asn/Gln) amidotransferase subunit B (517 aa).

The protein belongs to the GatB/GatE family. GatB subfamily. In terms of assembly, heterotrimer of A, B and C subunits.

The catalysed reaction is L-glutamyl-tRNA(Gln) + L-glutamine + ATP + H2O = L-glutaminyl-tRNA(Gln) + L-glutamate + ADP + phosphate + H(+). It carries out the reaction L-aspartyl-tRNA(Asn) + L-glutamine + ATP + H2O = L-asparaginyl-tRNA(Asn) + L-glutamate + ADP + phosphate + 2 H(+). Its function is as follows. Allows the formation of correctly charged Asn-tRNA(Asn) or Gln-tRNA(Gln) through the transamidation of misacylated Asp-tRNA(Asn) or Glu-tRNA(Gln) in organisms which lack either or both of asparaginyl-tRNA or glutaminyl-tRNA synthetases. The reaction takes place in the presence of glutamine and ATP through an activated phospho-Asp-tRNA(Asn) or phospho-Glu-tRNA(Gln). This chain is Aspartyl/glutamyl-tRNA(Asn/Gln) amidotransferase subunit B, found in Thermobifida fusca (strain YX).